A 246-amino-acid polypeptide reads, in one-letter code: Hydroxyacylglutathione hydrolase (246 aa).

Residues H58, H60, D62, H63, H117, D137, and H175 each contribute to the Zn(2+) site.

Belongs to the metallo-beta-lactamase superfamily. Glyoxalase II family. Monomer. Zn(2+) serves as cofactor.

It carries out the reaction an S-(2-hydroxyacyl)glutathione + H2O = a 2-hydroxy carboxylate + glutathione + H(+). Its pathway is secondary metabolite metabolism; methylglyoxal degradation; (R)-lactate from methylglyoxal: step 2/2. Functionally, thiolesterase that catalyzes the hydrolysis of S-D-lactoyl-glutathione to form glutathione and D-lactic acid. The protein is Hydroxyacylglutathione hydrolase of Prochlorococcus marinus (strain MIT 9312).